The primary structure comprises 217 residues: Magnetosome protein MamA (217 aa).

TPR repeat units lie at residues 12 to 44, 46 to 79, 80 to 113, 114 to 147, 148 to 181, and 182 to 215; these read VTLY…NDDI, QVYY…DAFD, VDVA…APDN, VKVA…NPIN, FNVR…RPNE, and GKVH…DEGA. Residues 41-112 form an N-terminal domain (NTD) region; the sequence is NDDIRQVYYR…LERSLADAPD (72 aa). Residues 113-217 are C-terminal domain (CTD); it reads NVKVATVLGL…ANELDEGASV (105 aa).

It belongs to the magnetosome MamA family. As to quaternary structure, oligomerizes into high molecular weight complexes (at least 560 kDa). Forms round, 20 nm diameter complexes with a central cavity. Interacts with full-length Mms6. Probably binds MamC.

The protein localises to the magnetosome membrane. Functionally, probably forms a large homooligomer on which other magnetosome subunits assemble. Required for formation of functional magnetosomes from pre-existing vesicles, it has a dynamic location in the cell. This Paramagnetospirillum magneticum (strain ATCC 700264 / AMB-1) (Magnetospirillum magneticum) protein is Magnetosome protein MamA.